Consider the following 240-residue polypeptide: Probable Ni/Fe-hydrogenase B-type cytochrome subunit (240 aa).

A run of 4 helical transmembrane segments spans residues 31-51, 75-95, 142-163, and 196-213; these read LWHW…YFIG, FAAG…AFVG, LAMF…FALY, and LGMW…YLAA.

The protein belongs to the HupC/HyaC/HydC family.

Its subcellular location is the cell membrane. Its function is as follows. Probable b-type cytochrome. This Azotobacter chroococcum mcd 1 protein is Probable Ni/Fe-hydrogenase B-type cytochrome subunit (hupZ).